We begin with the raw amino-acid sequence, 147 residues long: Hemoglobin subunit gamma (147 aa).

A Globin domain is found at 3-147; it reads HFTAEEKAII…VATALAHKYH (145 aa). Positions 64 and 93 each coordinate heme b.

The protein belongs to the globin family. Heterotetramer of two alpha chains and two gamma chains in fetal hemoglobin (Hb F). As to expression, red blood cells.

Its function is as follows. Gamma chains make up the fetal hemoglobin F, in combination with alpha chains. This chain is Hemoglobin subunit gamma (HBG), found in Otolemur crassicaudatus (Brown greater galago).